Consider the following 462-residue polypeptide: Myb-like transcriptional regulator mfmK (462 aa).

3 HTH myb-type domains span residues 1–54 (MARL…WWNS), 56–110 (ADGT…DPGI), and 113–162 (CDWT…LKHE). 3 consecutive DNA-binding regions (H-T-H motif) follow at residues 32–52 (WRDL…RRWW), 83–106 (WSRV…SQVL), and 134–158 (WATI…STLR). Residues 159-175 (LKHENESKRESTIRKSV) are compositionally biased toward basic and acidic residues. Disordered regions lie at residues 159 to 184 (LKHE…NFEP), 216 to 262 (DEEE…VDNG), and 374 to 408 (STTT…RTSI). Acidic residues predominate over residues 216 to 235 (DEEEDDDDDDEDNEEDDGDD). 2 stretches are compositionally biased toward polar residues: residues 374 to 385 (STTTGMDSSSAP) and 396 to 408 (FGTS…RTSI).

It is found in the nucleus. Functionally, myb-like transcriptional regulator; part of the gene cluster that mediates the biosynthesis of the phthalide-terpenoid hybrid 11'-O-desmethylfendlerol. This is Myb-like transcriptional regulator mfmK from Annulohypoxylon moriforme (Filamentous fungus).